The primary structure comprises 556 residues: F-box protein YDR131C (556 aa).

An F-box domain is found at Met-1–Leu-44.

Interacts with SKP1. Component of the probable SCF(YDR131C) complex containing CDC53, SKP1, RBX1 and YDR131C.

The protein resides in the vacuole. It functions in the pathway protein modification; protein ubiquitination. In terms of biological role, substrate recognition component of a SCF (SKP1-CUL1-F-box protein) E3 ubiquitin-protein ligase complex which mediates the ubiquitination and subsequent proteasomal degradation of target proteins. Probably recognizes and binds to phosphorylated target proteins. This Saccharomyces cerevisiae (strain ATCC 204508 / S288c) (Baker's yeast) protein is F-box protein YDR131C.